Reading from the N-terminus, the 191-residue chain is Fe/S biogenesis protein NfuA (191 aa).

2 residues coordinate [4Fe-4S] cluster: cysteine 149 and cysteine 152.

Belongs to the NfuA family. In terms of assembly, homodimer. It depends on [4Fe-4S] cluster as a cofactor.

Involved in iron-sulfur cluster biogenesis. Binds a 4Fe-4S cluster, can transfer this cluster to apoproteins, and thereby intervenes in the maturation of Fe/S proteins. Could also act as a scaffold/chaperone for damaged Fe/S proteins. This Buchnera aphidicola subsp. Baizongia pistaciae (strain Bp) protein is Fe/S biogenesis protein NfuA.